Consider the following 350-residue polypeptide: Decarboxylase iboD (350 aa).

The protein belongs to the phosphatidylserine decarboxylase family.

The protein operates within secondary metabolite biosynthesis. In terms of biological role, decarboxylase; part of the gene cluster that mediates the biosynthesis of the psychoactive metabolites ibotenic acid and muscimol. The first committed step is glutamate hydroxylation by the 2-oxoglutarate-dependent dioxygenase iboH, and the last step is decarboxylation of ibotenic acid to muscimol by the decarboxylase iboD. The order of the intermediate reactions is somewhat ambiguous. IboA likely activates the carboxylic acid at position 5 to introduce an amide bond, and the flavin monooxygenase iboF generates the N-O bond. There are several options for the latter step. One option is that iboF directly hydroxylates the amide nitrogen formed by iboA to produce a hydroxamic acid species. Another option is that iboF hydroxylates an external N-containing compound, whose resulting N-O bond is subsequently introduced into the hydroxyglutamate scaffold. The paralogous PLP-dependent cystathionine gamma-synthase-like enzymes iboG1 and iboG2 are likely involved in substitution of the OH group at position 3 by the O-N moiety. The first cyclic intermediate is most probably tricholomic acid which is likely desaturated to ibotenic acid by the cytochrome P450 monooxygenase iboC. The protein is Decarboxylase iboD of Amanita muscaria (strain Koide BX008).